We begin with the raw amino-acid sequence, 304 residues long: Meiotically up-regulated gene 86 protein (304 aa).

Over residues 1–12 (MSSNPSRSNSRS) the composition is skewed to low complexity. Residues 1-23 (MSSNPSRSNSRSKNGDLESGLKF) are disordered. The next 6 helical transmembrane spans lie at 93–113 (PAPF…LFNV), 123–143 (MVTA…SMWE), 150–170 (FGGA…SIFI), 188–208 (AIGL…LCTV), 212–232 (LAFF…ACAF), and 247–267 (VGGA…MAGL).

This sequence belongs to the acetate uptake transporter (AceTr) (TC 2.A.96) family.

It is found in the endoplasmic reticulum membrane. Its subcellular location is the golgi apparatus. It localises to the golgi stack membrane. The protein localises to the vacuole membrane. Functionally, has a role in meiosis. The polypeptide is Meiotically up-regulated gene 86 protein (mug86) (Schizosaccharomyces pombe (strain 972 / ATCC 24843) (Fission yeast)).